Reading from the N-terminus, the 194-residue chain is MSDLIAKTSMDRRMAEIVTPSIEALGFEVVRIRVMGGKTNTLQIMAERPDGGIDVDECAQISNAISVLLDVEDPLEDAYALEVSSPGIDRPLTRLKDFETFEGYEAKLETTEMIGGQRRFKGVLAGVEDDEVLVNLEQGSETVTVGLNFDWLSDAKLVLTDELIKEMLKQRKDAGLINETQFDDIEEDPSNPED.

It belongs to the RimP family.

It localises to the cytoplasm. Functionally, required for maturation of 30S ribosomal subunits. The chain is Ribosome maturation factor RimP from Jannaschia sp. (strain CCS1).